The sequence spans 483 residues: Aspartyl/glutamyl-tRNA(Asn/Gln) amidotransferase subunit B (483 aa).

The protein belongs to the GatB/GatE family. GatB subfamily. In terms of assembly, heterotrimer of A, B and C subunits.

It carries out the reaction L-glutamyl-tRNA(Gln) + L-glutamine + ATP + H2O = L-glutaminyl-tRNA(Gln) + L-glutamate + ADP + phosphate + H(+). The catalysed reaction is L-aspartyl-tRNA(Asn) + L-glutamine + ATP + H2O = L-asparaginyl-tRNA(Asn) + L-glutamate + ADP + phosphate + 2 H(+). Functionally, allows the formation of correctly charged Asn-tRNA(Asn) or Gln-tRNA(Gln) through the transamidation of misacylated Asp-tRNA(Asn) or Glu-tRNA(Gln) in organisms which lack either or both of asparaginyl-tRNA or glutaminyl-tRNA synthetases. The reaction takes place in the presence of glutamine and ATP through an activated phospho-Asp-tRNA(Asn) or phospho-Glu-tRNA(Gln). This Brachyspira hyodysenteriae (strain ATCC 49526 / WA1) protein is Aspartyl/glutamyl-tRNA(Asn/Gln) amidotransferase subunit B.